Here is a 676-residue protein sequence, read N- to C-terminus: Methionine--tRNA ligase (676 aa).

Residues 15 to 25 carry the 'HIGH' region motif; that stretch reads PYANGPIHLGH. Residues cysteine 146, cysteine 149, cysteine 159, and cysteine 162 each contribute to the Zn(2+) site. The 'KMSKS' region signature appears at 332-336; sequence KMSKS. Residue lysine 335 coordinates ATP. In terms of domain architecture, tRNA-binding spans 575 to 676; sequence DFAKIDLRIA…EGAQPGMRVK (102 aa).

This sequence belongs to the class-I aminoacyl-tRNA synthetase family. MetG type 1 subfamily. As to quaternary structure, homodimer. Requires Zn(2+) as cofactor.

Its subcellular location is the cytoplasm. The catalysed reaction is tRNA(Met) + L-methionine + ATP = L-methionyl-tRNA(Met) + AMP + diphosphate. Its function is as follows. Is required not only for elongation of protein synthesis but also for the initiation of all mRNA translation through initiator tRNA(fMet) aminoacylation. The protein is Methionine--tRNA ligase of Shewanella sp. (strain MR-7).